Reading from the N-terminus, the 121-residue chain is Non-specific lipid-transfer protein 3 (121 aa).

The signal sequence occupies residues 1–28; the sequence is MAGARRTMALVALVAVVAAAVVAERASA. Disulfide bonds link cysteine 32–cysteine 80, cysteine 42–cysteine 57, cysteine 58–cysteine 103, and cysteine 78–cysteine 117.

It belongs to the plant LTP family.

Functionally, plant non-specific lipid-transfer proteins transfer phospholipids as well as galactolipids across membranes. May play a role in wax or cutin deposition in the cell walls of expanding epidermal cells and certain secretory tissues. May possess an antifungal activity and protect the plant against pathogens. The sequence is that of Non-specific lipid-transfer protein 3 (LTP110-A) from Oryza sativa subsp. indica (Rice).